Consider the following 211-residue polypeptide: MSTTTVPELKQISREEAMRLGPGWSHSCHAMLYAANPGQLFGRIPMRFSVLMQMRFDGLLGFPGGFVDRRFWSLEDGLNRVLGLGLGGLRLTEADYLSSHLTEGPHRVVAHLYARQLTLEQLHAVEISAVHSRDHGLEVLGLVRVPLYTQKDRVGGFPNFLSNAFVSTAKYQLLFALKVLNMMPSEKLAEALASATEKQKKALEKLLPPSS.

Glycyl lysine isopeptide (Lys-Gly) (interchain with G-Cter in ubiquitin) cross-links involve residues Lys-10 and Lys-151. Positions 118-205 are interaction with PXN; sequence TLEQLHAVEI…TEKQKKALEK (88 aa).

It belongs to the Nudix hydrolase family. TIRR subfamily. As to quaternary structure, homodimer. Interacts with TP53BP1 (via the Tudor-like domain); interaction is abolished following DNA damage and TP53BP1 phosphorylation by ATM. Interacts (via the cytoplasmic part) with SDC4. Interacts with TGFB1I1 and PXN.

The protein resides in the nucleus. In terms of biological role, key regulator of TP53BP1 required to stabilize TP53BP1 and regulate its recruitment to chromatin. In absence of DNA damage, interacts with the tandem Tudor-like domain of TP53BP1, masking the region that binds histone H4 dimethylated at 'Lys-20' (H4K20me2), thereby preventing TP53BP1 recruitment to chromatin and maintaining TP53BP1 localization to the nucleus. Following DNA damage, ATM-induced phosphorylation of TP53BP1 and subsequent recruitment of RIF1 leads to dissociate NUDT16L1/TIRR from TP53BP1, unmasking the tandem Tudor-like domain and allowing recruitment of TP53BP1 to DNA double strand breaks (DSBs). Binds U8 snoRNA. The sequence is that of Tudor-interacting repair regulator protein from Mus musculus (Mouse).